Consider the following 126-residue polypeptide: Large ribosomal subunit protein bL17 (126 aa).

Belongs to the bacterial ribosomal protein bL17 family. As to quaternary structure, part of the 50S ribosomal subunit. Contacts protein L32.

This Coxiella burnetii (strain CbuK_Q154) (Coxiella burnetii (strain Q154)) protein is Large ribosomal subunit protein bL17.